Here is a 133-residue protein sequence, read N- to C-terminus: Putative redox protein FMP46, mitochondrial (133 aa).

A mitochondrion-targeting transit peptide spans 1–21; sequence MSFWKTLQRQPRTISLFTNDI. Cys97 is an active-site residue.

This sequence belongs to the FMP46 family.

The protein localises to the mitochondrion. Its function is as follows. Putative mitochondrial redox protein which could be involved in the reduction of small toxic molecules. This Saccharomyces cerevisiae (strain ATCC 204508 / S288c) (Baker's yeast) protein is Putative redox protein FMP46, mitochondrial (FMP46).